Reading from the N-terminus, the 272-residue chain is METYAVFGNPIAHSKSPFIHQQFAQQLNIEHPYGRVLAPINDFVNTLNAFFSAGGKGANVTVPFKEEAFARADELTERAALAGAVNTLKRLEDGRLLGDNTDGVGLLSDLERLSFIRPGLRILLIGAGGASRGVLLPLLSLDCAVTITNRTVSRAEELAKLFAHTGSIQALGMDELEGHEFDLIINATSSGISGDIPAIPSSLIHPGIYCYDMFYQKGKTPFLAWCEQRGSKPTADGLGMLVAQAAHAFLLWHGVLPDVEPVIKQLQEELSA.

Residues serine 14–serine 16 and threonine 61 each bind shikimate. Lysine 65 serves as the catalytic Proton acceptor. Glutamate 77 serves as a coordination point for NADP(+). Residues asparagine 86 and aspartate 102 each contribute to the shikimate site. Residues glycine 126–alanine 130, asparagine 149–arginine 154, and methionine 213 each bind NADP(+). Tyrosine 215 lines the shikimate pocket. Glycine 237 contacts NADP(+).

This sequence belongs to the shikimate dehydrogenase family. Homodimer.

It catalyses the reaction shikimate + NADP(+) = 3-dehydroshikimate + NADPH + H(+). Its pathway is metabolic intermediate biosynthesis; chorismate biosynthesis; chorismate from D-erythrose 4-phosphate and phosphoenolpyruvate: step 4/7. Involved in the biosynthesis of the chorismate, which leads to the biosynthesis of aromatic amino acids. Catalyzes the reversible NADPH linked reduction of 3-dehydroshikimate (DHSA) to yield shikimate (SA). This chain is Shikimate dehydrogenase (NADP(+)), found in Escherichia coli O157:H7.